Reading from the N-terminus, the 121-residue chain is Mu-hexatoxin-Mg1a (121 aa).

Positions 1-20 are cleaved as a signal peptide; the sequence is MMTLSPFLLLLIAAVVIGNA. A propeptide spanning residues 21–80 is cleaved from the precursor; the sequence is SEGEVKNEFEERLKDEFKDPSRSEVAEVILLRELEVLEETLFGKEMTSDTEENRNSREKR. Intrachain disulfides connect cysteine 81–cysteine 95, cysteine 88–cysteine 102, and cysteine 94–cysteine 116. Lysine 120 carries the post-translational modification Lysine amide.

It belongs to the neurotoxin 14 (magi-1) family. 09 (magi-1) subfamily. Expressed by the venom gland.

The protein localises to the secreted. Insecticidal neurotoxin. Shows competition for site 3 of insect voltage-gated sodium channels (Nav). Induces flaccid paralysis when injected into lepidopteran larvae. Is not toxic to mice when injected intracranially at 20 pmol/g. The protein is Mu-hexatoxin-Mg1a of Macrothele gigas (Japanese funnel web spider).